Consider the following 810-residue polypeptide: Lon protease (810 aa).

A Lon N-terminal domain is found at 16 to 209; the sequence is YPVPPLRDIV…RVYAFMEGEI (194 aa). 361–368 is an ATP binding site; that stretch reads GPPGVGKT. The Lon proteolytic domain occupies 598-779; that stretch reads EDLVGVTTGL…DDVLKHALVR (182 aa). Active-site residues include S685 and K728.

Belongs to the peptidase S16 family. As to quaternary structure, homohexamer. Organized in a ring with a central cavity.

The protein resides in the cytoplasm. It catalyses the reaction Hydrolysis of proteins in presence of ATP.. Functionally, ATP-dependent serine protease that mediates the selective degradation of mutant and abnormal proteins as well as certain short-lived regulatory proteins. Required for cellular homeostasis and for survival from DNA damage and developmental changes induced by stress. Degrades polypeptides processively to yield small peptide fragments that are 5 to 10 amino acids long. Binds to DNA in a double-stranded, site-specific manner. Involved in iron uptake. In Azospirillum brasilense, this protein is Lon protease.